An 80-amino-acid polypeptide reads, in one-letter code: Sec-independent protein translocase protein TatA (80 aa).

The chain crosses the membrane as a helical span at residues 1-21 (MGISMWQLLIVLLIIVLLFGT). The disordered stretch occupies residues 39-80 (KKAMSDGESEEDKEPKKLSQNESRTIEGSVERNDAKTESKHS). Residues 67 to 80 (SVERNDAKTESKHS) are compositionally biased toward basic and acidic residues.

It belongs to the TatA/E family. In terms of assembly, the Tat system comprises two distinct complexes: a TatABC complex, containing multiple copies of TatA, TatB and TatC subunits, and a separate TatA complex, containing only TatA subunits. Substrates initially bind to the TatABC complex, which probably triggers association of the separate TatA complex to form the active translocon.

Its subcellular location is the cell inner membrane. Functionally, part of the twin-arginine translocation (Tat) system that transports large folded proteins containing a characteristic twin-arginine motif in their signal peptide across membranes. TatA could form the protein-conducting channel of the Tat system. This Hahella chejuensis (strain KCTC 2396) protein is Sec-independent protein translocase protein TatA.